Consider the following 448-residue polypeptide: Na(+)-malate symporter (448 aa).

The next 11 membrane-spanning stretches (helical) occupy residues 31–51 (IGVIPLPLYTVLAVIIILAAY), 60–80 (LGGFAIIMILGVFLGDIGQRI), 86–106 (IGGPAILSLFVPSFLVFYNVL), 123–143 (FLYFYIACLVVGSILGMNRIV), 153–173 (VPLVAGTIAAVAAGILVGFIF), 182–202 (FFVVVPIIAGGIGEGILPLSI), 214–234 (VFVSQLVPAAIIGNVFAIICA), 276–293 (LMGAGVLLACTFFIFGGL), 297–319 (FIFIPGAILMIISAAAVKYANIL), 333–353 (FISSSFTWPLMVGLGILFIPL), and 359–379 (VISIPFVIICISVVIAMIGSG).

This sequence belongs to the 2-hydroxycarboxylate transporter (2-HCT) (TC 2.A.24) family.

It is found in the cell membrane. Functionally, acts as a Na(+)-malate symporter, as it catalyzes malate-dependent uptake of Na(+) and Na(+)-dependent uptake of malate. In Bacillus subtilis (strain 168), this protein is Na(+)-malate symporter.